Here is a 430-residue protein sequence, read N- to C-terminus: Probable transporter SCO4007 (430 aa).

Residues Met-1–Ala-17 show a composition bias toward low complexity. Residues Met-1–Gly-26 are disordered. 11 helical membrane passes run Leu-34–Ala-54, Ala-70–Ala-90, Leu-101–Gly-121, Ala-126–Val-146, Val-159–Leu-179, Ala-188–Leu-208, Ala-244–Gly-264, Gly-275–Val-295, Val-315–Val-335, Thr-362–Ala-382, and Phe-383–Trp-403.

It belongs to the major facilitator superfamily.

It localises to the cell membrane. This is Probable transporter SCO4007 from Streptomyces coelicolor (strain ATCC BAA-471 / A3(2) / M145).